Here is an 813-residue protein sequence, read N- to C-terminus: Ribosome-releasing factor 2, mitochondrial (813 aa).

The transit peptide at 1 to 20 (MLRIVWKPLKIRLPVWRRYQ) directs the protein to the mitochondrion. The tr-type G domain maps to 26 to 314 (NSIRNVGIIA…AIIDYLPSPV (289 aa)). GTP is bound by residues 35 to 42 (AHIDAGKT), 99 to 103 (DTPGH), and 153 to 156 (NKMD).

This sequence belongs to the TRAFAC class translation factor GTPase superfamily. Classic translation factor GTPase family. EF-G/EF-2 subfamily.

The protein localises to the mitochondrion. Mitochondrial GTPase that mediates the disassembly of ribosomes from messenger RNA at the termination of mitochondrial protein biosynthesis. Not involved in the GTP-dependent ribosomal translocation step during translation elongation. The chain is Ribosome-releasing factor 2, mitochondrial (mef2) from Schizosaccharomyces pombe (strain 972 / ATCC 24843) (Fission yeast).